The sequence spans 512 residues: MKKQHDTIIVLDFGSQYNQLIARRIREFGVYSELHPHTITAEEIKAMNPKGIIFSGGPNSVYGEGALHCDEKIFELGLPIFGICYGMQLMTQHFGGKVERANHREYGKAVLKVENESKLYANLPEEQVVWMSHGDLVTGLPEGFVVDATSESCPIAGMSNEAKNLYGVQFHPEVRHSEHGNDLIKNFVFGVCGCSEGWNMENFIEVELEKIRETVGDKKVLCALSGGVDSSVVAVLIHKAIGDQLTCIFVDHGLLRKGEAEGVMKTFSEGFHMNVIKVDAKDRFMDKLKGVEDPEQKRKIIGNEFIYVFDDEASKLQGMDFLAQGTLYTDIVESGTATAQTIKSHHNVGGLPEDMQFKLIEPLNTLFKDEVRVLGSELGIPDEIVWRQPFPGPGLGIRVLGEITEEKLEIVRESDAILREEIIKAGLDREIWQYFTALPGMRSVGVMGDERTYDYTVGIRAVTSIDGMTADWARIPWDVLEKISVRIVNEVKHVNRIVYDVTSKPPATIEWE.

The region spanning 7–197 (TIIVLDFGSQ…VFGVCGCSEG (191 aa)) is the Glutamine amidotransferase type-1 domain. The active-site Nucleophile is Cys-84. Catalysis depends on residues His-171 and Glu-173. Residues 198–387 (WNMENFIEVE…LGIPDEIVWR (190 aa)) form the GMPS ATP-PPase domain. 225-231 (SGGVDSS) provides a ligand contact to ATP.

As to quaternary structure, homodimer.

It catalyses the reaction XMP + L-glutamine + ATP + H2O = GMP + L-glutamate + AMP + diphosphate + 2 H(+). It participates in purine metabolism; GMP biosynthesis; GMP from XMP (L-Gln route): step 1/1. Functionally, catalyzes the synthesis of GMP from XMP. This chain is GMP synthase [glutamine-hydrolyzing], found in Bacillus cereus (strain B4264).